The sequence spans 123 residues: MLNQRQQYGRQGEQAAERFLKKEGYTIVCRNYRTPVGEIDIIAKDKTTLAFVEVKARRTESYGSPRLSITKDKQRKITRAALWYLKDTGQAGARARFDVVIVQGRDNSVELIRNAFDANLAAS.

It belongs to the UPF0102 family.

This Desulfosudis oleivorans (strain DSM 6200 / JCM 39069 / Hxd3) (Desulfococcus oleovorans) protein is UPF0102 protein Dole_2298.